The sequence spans 862 residues: DNA mismatch repair protein MutS (862 aa).

621–628 contributes to the ATP binding site; sequence GPNMGGKS.

This sequence belongs to the DNA mismatch repair MutS family.

In terms of biological role, this protein is involved in the repair of mismatches in DNA. It is possible that it carries out the mismatch recognition step. This protein has a weak ATPase activity. This chain is DNA mismatch repair protein MutS, found in Vibrio cholerae serotype O1 (strain ATCC 39541 / Classical Ogawa 395 / O395).